A 351-amino-acid polypeptide reads, in one-letter code: Leukotriene B4 receptor 1 (351 aa).

The Extracellular segment spans residues 1–21 (MAANTTSTAATSSPGGMSLSL). Residue asparagine 4 is glycosylated (N-linked (GlcNAc...) asparagine). The chain crosses the membrane as a helical span at residues 22-44 (LPIVLLSVALVVGLPGNSFVVWS). The Cytoplasmic portion of the chain corresponds to 45–56 (ILKRMQKRSVTA). Residues 57–77 (LLVLNLALADLAVLLTAPFFL) traverse the membrane as a helical segment. Residues 78 to 93 (HFLARGTWSFEVTGCR) lie on the Extracellular side of the membrane. Residues 94-115 (LCHYVCGVSMYASVLLITIMSL) traverse the membrane as a helical segment. The Cytoplasmic segment spans residues 116–140 (DRSLAVARPFVSQKVRTKAFARWVL). The chain crosses the membrane as a helical span at residues 141–161 (AGIWVVSFLLAIPVLVYRTVT). Over 162 to 179 (PKNKTLICDSRYPSDGHK) the chain is Extracellular. An N-linked (GlcNAc...) asparagine glycan is attached at asparagine 164. The helical transmembrane segment at 180 to 200 (VFHLLFEAITGFLLPFLAVVA) threads the bilayer. Residues 201–222 (SYSDIGRRLQARRFRRSRRTGR) lie on the Cytoplasmic side of the membrane. Residues 223–243 (LVVLIILAFAAFWLPYHLVNL) traverse the membrane as a helical segment. Topologically, residues 244–268 (VEAGRTLAGWDKNSPAGQRLKLARY) are extracellular. The chain crosses the membrane as a helical span at residues 269 to 289 (VLIALAFLSSSVNPVLYACAG). The Cytoplasmic segment spans residues 290–351 (GGLLRSAGVG…TSSTPPESSK (62 aa)). Composition is skewed to polar residues over residues 311–327 (EVSS…TPKA) and 339–351 (SFMT…ESSK). Positions 311-351 (EVSSTRRGGTLVQTPKATPTCPEPGPTDSFMTSSTPPESSK) are disordered.

The protein belongs to the G-protein coupled receptor 1 family. Phosphorylated by GRK6 upon leukotriene B4 binding; which promotes desensitization. In terms of tissue distribution, exclusively expressed in polymorphonuclear leukocytes.

It is found in the cell membrane. Functionally, receptor for leukotriene B4, a potent chemoattractant involved in inflammation and immune response. The chain is Leukotriene B4 receptor 1 (Ltb4r) from Rattus norvegicus (Rat).